The primary structure comprises 132 residues: Sec-independent protein translocase protein TatB (132 aa).

A helical transmembrane segment spans residues 2-22; that stretch reads FDGIGFMELLLIGILGLVVLG. Composition is skewed to polar residues over residues 86 to 95 and 116 to 132; these read LKQAAQSVNR and IAET…KNNG. A disordered region spans residues 86–132; sequence LKQAAQSVNRPYQLDESNEQEPKIAPPQANIAETPTQSGDTHSKNNG.

Belongs to the TatB family. The Tat system comprises two distinct complexes: a TatABC complex, containing multiple copies of TatA, TatB and TatC subunits, and a separate TatA complex, containing only TatA subunits. Substrates initially bind to the TatABC complex, which probably triggers association of the separate TatA complex to form the active translocon.

The protein localises to the cell inner membrane. Functionally, part of the twin-arginine translocation (Tat) system that transports large folded proteins containing a characteristic twin-arginine motif in their signal peptide across membranes. Together with TatC, TatB is part of a receptor directly interacting with Tat signal peptides. TatB may form an oligomeric binding site that transiently accommodates folded Tat precursor proteins before their translocation. In Shewanella denitrificans (strain OS217 / ATCC BAA-1090 / DSM 15013), this protein is Sec-independent protein translocase protein TatB.